The following is a 118-amino-acid chain: Large ribosomal subunit protein bL19 (118 aa).

Belongs to the bacterial ribosomal protein bL19 family.

This protein is located at the 30S-50S ribosomal subunit interface and may play a role in the structure and function of the aminoacyl-tRNA binding site. This chain is Large ribosomal subunit protein bL19, found in Herpetosiphon aurantiacus (strain ATCC 23779 / DSM 785 / 114-95).